A 138-amino-acid polypeptide reads, in one-letter code: Large ribosomal subunit protein eL14B (138 aa).

Serine 2 is modified (N-acetylserine).

This sequence belongs to the eukaryotic ribosomal protein eL14 family. In terms of assembly, component of the large ribosomal subunit (LSU). Mature yeast ribosomes consist of a small (40S) and a large (60S) subunit. The 40S small subunit contains 1 molecule of ribosomal RNA (18S rRNA) and 33 different proteins (encoded by 57 genes). The large 60S subunit contains 3 rRNA molecules (25S, 5.8S and 5S rRNA) and 46 different proteins (encoded by 81 genes). N-terminally acetylated by acetyltransferase NatA.

It localises to the cytoplasm. Its function is as follows. Component of the ribosome, a large ribonucleoprotein complex responsible for the synthesis of proteins in the cell. The small ribosomal subunit (SSU) binds messenger RNAs (mRNAs) and translates the encoded message by selecting cognate aminoacyl-transfer RNA (tRNA) molecules. The large subunit (LSU) contains the ribosomal catalytic site termed the peptidyl transferase center (PTC), which catalyzes the formation of peptide bonds, thereby polymerizing the amino acids delivered by tRNAs into a polypeptide chain. The nascent polypeptides leave the ribosome through a tunnel in the LSU and interact with protein factors that function in enzymatic processing, targeting, and the membrane insertion of nascent chains at the exit of the ribosomal tunnel. The protein is Large ribosomal subunit protein eL14B of Saccharomyces cerevisiae (strain ATCC 204508 / S288c) (Baker's yeast).